A 602-amino-acid chain; its full sequence is Elongation factor 4 (602 aa).

A tr-type G domain is found at 7-189; sequence SRIRNFCIIA…AVVDRVPAPA (183 aa). GTP-binding positions include 19–24 and 136–139; these read DHGKST and NKID.

It belongs to the TRAFAC class translation factor GTPase superfamily. Classic translation factor GTPase family. LepA subfamily.

The protein resides in the cell inner membrane. The catalysed reaction is GTP + H2O = GDP + phosphate + H(+). Required for accurate and efficient protein synthesis under certain stress conditions. May act as a fidelity factor of the translation reaction, by catalyzing a one-codon backward translocation of tRNAs on improperly translocated ribosomes. Back-translocation proceeds from a post-translocation (POST) complex to a pre-translocation (PRE) complex, thus giving elongation factor G a second chance to translocate the tRNAs correctly. Binds to ribosomes in a GTP-dependent manner. This Synechococcus sp. (strain CC9902) protein is Elongation factor 4.